The primary structure comprises 399 residues: Mycinamicin VI 2''-O-methyltransferase (399 aa).

S-adenosyl-L-methionine is bound by residues Thr-173, 202–208 (EIGVGGY), Ser-217, Asp-234, 252–253 (DQ), and Asp-275. Residue Asp-275 coordinates Mg(2+). Catalysis depends on His-278, which acts as the Proton acceptor. Residues Glu-303 and Asp-304 each contribute to the Mg(2+) site.

The protein belongs to the methyltransferase OleY/MycE family. As to quaternary structure, homotetramer. The cofactor is Mg(2+).

The enzyme catalyses mycinamicin VI + S-adenosyl-L-methionine = mycinamicin III + S-adenosyl-L-homocysteine + H(+). Its pathway is antibiotic biosynthesis; mycinamicin biosynthesis. Its function is as follows. O-methyltransferase that catalyzes the conversion of mycinamicin VI to mycinamicin III in the biosynthesis of mycinamicin, a 16-membered macrolide antibiotic. The sequence is that of Mycinamicin VI 2''-O-methyltransferase (mycE) from Micromonospora griseorubida.